The primary structure comprises 481 residues: UDP-N-acetylmuramoyl-L-alanyl-D-glutamate--L-lysine ligase (481 aa).

Ser42 contacts UDP-N-acetyl-alpha-D-muramoyl-L-alanyl-D-glutamate. 118–124 (GTKGKTT) lines the ATP pocket. UDP-N-acetyl-alpha-D-muramoyl-L-alanyl-D-glutamate is bound by residues Gln158, 160–161 (TT), Ser187, and Arg195. Lys229 carries the post-translational modification N6-carboxylysine. An L-lysine recognition motif motif is present at residues 404–407 (DDPN).

Belongs to the MurCDEF family. MurE subfamily. Carboxylation is probably crucial for Mg(2+) binding and, consequently, for the gamma-phosphate positioning of ATP.

The protein localises to the cytoplasm. The catalysed reaction is UDP-N-acetyl-alpha-D-muramoyl-L-alanyl-D-glutamate + L-lysine + ATP = UDP-N-acetyl-alpha-D-muramoyl-L-alanyl-gamma-D-glutamyl-L-lysine + ADP + phosphate + H(+). Its pathway is cell wall biogenesis; peptidoglycan biosynthesis. Its function is as follows. Catalyzes the addition of L-lysine to the nucleotide precursor UDP-N-acetylmuramoyl-L-alanyl-D-glutamate (UMAG) in the biosynthesis of bacterial cell-wall peptidoglycan. The chain is UDP-N-acetylmuramoyl-L-alanyl-D-glutamate--L-lysine ligase from Streptococcus pyogenes serotype M28 (strain MGAS6180).